We begin with the raw amino-acid sequence, 744 residues long: Vesicle-fusing ATPase (744 aa).

At K105 the chain carries N6-acetyllysine. Phosphoserine is present on S207. Y259 is subject to Phosphotyrosine. Residues 505-510 (NGIIKW) and 545-552 (PHSGKTAL) each bind ATP. T550 is a Mg(2+) binding site. S569 carries the phosphoserine; by CDK16 modification.

Belongs to the AAA ATPase family. As to quaternary structure, homohexamer. Interacts with GABARAP and GABARAPL2. Interacts with GRIA2. Interacts with PLK2, leading to disrupt the interaction with GRIA2. Interacts with MUSK; may regulate MUSK endocytosis and activity. Interacts with CDK16. It depends on Mg(2+) as a cofactor. Phosphorylation at Ser-569 interferes with homohexamerization. As to expression, detected in brain (at protein level).

It localises to the cytoplasm. It catalyses the reaction ATP + H2O = ADP + phosphate + H(+). Functionally, required for vesicle-mediated transport. Catalyzes the fusion of transport vesicles within the Golgi cisternae. Is also required for transport from the endoplasmic reticulum to the Golgi stack. Seems to function as a fusion protein required for the delivery of cargo proteins to all compartments of the Golgi stack independent of vesicle origin. Interaction with AMPAR subunit GRIA2 leads to influence GRIA2 membrane cycling. This Rattus norvegicus (Rat) protein is Vesicle-fusing ATPase (Nsf).